The following is a 324-amino-acid chain: Olfactory receptor 6K2 (324 aa).

Residues 1–25 lie on the Extracellular side of the membrane; sequence MESPNRTTIQEFIFSAFPYSWVKSV. N-linked (GlcNAc...) asparagine glycosylation is present at asparagine 5. Residues 26–46 traverse the membrane as a helical segment; the sequence is VCFVPLLFIYAFIVVGNLVII. Over 47–54 the chain is Cytoplasmic; it reads TVVQLNTH. The helical transmembrane segment at 55-75 threads the bilayer; it reads LHTPMYTFISALSFLEIWYTT. Over 76-98 the chain is Extracellular; sequence ATIPKMLSSLLSERSISFNGCLL. An intrachain disulfide couples cysteine 96 to cysteine 188. The helical transmembrane segment at 99-119 threads the bilayer; sequence QMYFFHSTGICEVCLLTVMAF. Over 120 to 138 the chain is Cytoplasmic; the sequence is DHYLAICSPLHYPSIMTPK. A helical transmembrane segment spans residues 139-159; it reads LCTQLTLSCCVCGFITPLPEI. The Extracellular segment spans residues 160 to 198; sequence AWISTLPFCGSNHLEHIFCDFLPVLRLACTDTRAIVMIQ. A helical transmembrane segment spans residues 199–218; the sequence is VVDVIHAVEIITAVMLIFMS. The Cytoplasmic segment spans residues 219–238; sequence YDGIVAVILRIHSAGGRRTA. Residues 239–259 form a helical membrane-spanning segment; it reads FSTCVSHFIVFSLFFGSVTLM. Residues 260–272 lie on the Extracellular side of the membrane; sequence YLRFSATYSLFWD. A helical transmembrane segment spans residues 273-293; that stretch reads IAIALAFAVLSPFFNPIIYSL. Residues 294-324 lie on the Cytoplasmic side of the membrane; that stretch reads RNKEIKEAIKKHIGQAKIFFSVRPGTSSKIF.

Belongs to the G-protein coupled receptor 1 family.

It is found in the cell membrane. Functionally, odorant receptor. This is Olfactory receptor 6K2 (OR6K2) from Homo sapiens (Human).